The following is a 53-amino-acid chain: Conotoxin Ac4.3b (53 aa).

A propeptide spanning residues 1 to 11 (SDVRNAAVHER) is cleaved from the precursor. The residue at position 12 (Gln-12) is a Pyrrolidone carboxylic acid. Glu-14 is modified (4-carboxyglutamate). O-linked (HexNAc...) serine glycosylation occurs at Ser-18. 4-hydroxyproline occurs at positions 28, 33, and 48. Pro-48 is subject to Proline amide. Residues 49 to 53 (GRRND) constitute a propeptide that is removed on maturation.

Belongs to the conotoxin A superfamily. Post-translationally, contains 3 disulfide bonds. As to expression, expressed by the venom duct.

It localises to the secreted. Functionally, probable neurotoxin with ion channel inhibitor activity. The polypeptide is Conotoxin Ac4.3b (Conus achatinus (Little frog cone)).